The chain runs to 220 residues: Probable transaldolase (220 aa).

Lys-87 (schiff-base intermediate with substrate) is an active-site residue.

This sequence belongs to the transaldolase family. Type 3B subfamily.

It localises to the cytoplasm. It catalyses the reaction D-sedoheptulose 7-phosphate + D-glyceraldehyde 3-phosphate = D-erythrose 4-phosphate + beta-D-fructose 6-phosphate. It functions in the pathway carbohydrate degradation; pentose phosphate pathway; D-glyceraldehyde 3-phosphate and beta-D-fructose 6-phosphate from D-ribose 5-phosphate and D-xylulose 5-phosphate (non-oxidative stage): step 2/3. In terms of biological role, transaldolase is important for the balance of metabolites in the pentose-phosphate pathway. This Porphyromonas gingivalis (strain ATCC 33277 / DSM 20709 / CIP 103683 / JCM 12257 / NCTC 11834 / 2561) protein is Probable transaldolase.